The chain runs to 209 residues: Ribosomal RNA small subunit methyltransferase G (209 aa).

S-adenosyl-L-methionine contacts are provided by residues glycine 71, phenylalanine 76, 122-123 (AE), and arginine 135.

It belongs to the methyltransferase superfamily. RNA methyltransferase RsmG family.

The protein resides in the cytoplasm. In terms of biological role, specifically methylates the N7 position of a guanine in 16S rRNA. The sequence is that of Ribosomal RNA small subunit methyltransferase G from Flavobacterium johnsoniae (strain ATCC 17061 / DSM 2064 / JCM 8514 / BCRC 14874 / CCUG 350202 / NBRC 14942 / NCIMB 11054 / UW101) (Cytophaga johnsonae).